The primary structure comprises 223 residues: Immediate early response gene 2 protein (223 aa).

At Met1 the chain carries N-acetylmethionine. The segment at 63–172 (AALPSDPRLH…PPAQAEGAFP (110 aa)) is disordered. Over residues 69–78 (PRLHPPREAE) the composition is skewed to basic and acidic residues. Positions 125–138 (SSLSDGGDAGLVPS) are enriched in low complexity.

This sequence belongs to the IER family. As to expression, expressed in activated T-cells (at protein level). Expression increases in metastatic tumor cells (at protein level).

It localises to the cytoplasm. It is found in the nucleus. In terms of biological role, DNA-binding protein that seems to act as a transcription factor. Involved in the regulation of neuronal differentiation, acts upon JNK-signaling pathway activation and plays a role in neurite outgrowth in hippocampal cells. May mediate with FIBP FGF-signaling in the establishment of laterality in the embryo. Promotes cell motility, seems to stimulate tumor metastasis. This chain is Immediate early response gene 2 protein, found in Homo sapiens (Human).